A 367-amino-acid chain; its full sequence is Alginate lyase (367 aa).

The first 24 residues, 1-24 (MTLLKRISSPALLALALFGGAAHA), serve as a signal peptide directing secretion. Residues 63 to 64 (SK), 136 to 137 (HT), and Tyr254 each bind substrate.

The protein belongs to the polysaccharide lyase 5 family.

It localises to the periplasm. It carries out the reaction Eliminative cleavage of alginate to give oligosaccharides with 4-deoxy-alpha-L-erythro-hex-4-enuronosyl groups at their non-reducing ends and beta-D-mannuronate at their reducing end.. Catalyzes the depolymerization of alginate by cleaving the beta-1,4 glycosidic bond between two adjacent sugar residues via a beta-elimination mechanism. May serve to degrade mislocalized alginate that is trapped in the periplasmic space. The sequence is that of Alginate lyase from Pseudomonas putida (strain GB-1).